The sequence spans 347 residues: N-acetyl-gamma-glutamyl-phosphate reductase (347 aa).

The active site involves cysteine 152.

This sequence belongs to the NAGSA dehydrogenase family. Type 1 subfamily.

Its subcellular location is the cytoplasm. The enzyme catalyses N-acetyl-L-glutamate 5-semialdehyde + phosphate + NADP(+) = N-acetyl-L-glutamyl 5-phosphate + NADPH + H(+). The protein operates within amino-acid biosynthesis; L-arginine biosynthesis; N(2)-acetyl-L-ornithine from L-glutamate: step 3/4. In terms of biological role, catalyzes the NADPH-dependent reduction of N-acetyl-5-glutamyl phosphate to yield N-acetyl-L-glutamate 5-semialdehyde. In Ehrlichia ruminantium (strain Gardel), this protein is N-acetyl-gamma-glutamyl-phosphate reductase.